The sequence spans 49 residues: Large ribosomal subunit protein bL33A (49 aa).

It belongs to the bacterial ribosomal protein bL33 family.

The protein is Large ribosomal subunit protein bL33A of Staphylococcus aureus (strain Mu3 / ATCC 700698).